The sequence spans 168 residues: MIRLMGIDPGLRFMGWGIIDVDGNHLKHVASGVIGTDGSESVPLRLCELHGALKKLIREYAPAEAAVEETYVNRNGSSTLKLGYARGVALLTPAYEGLPVAEYGAMTVKKSVVGTGSASKEQVTMMVKRLLPGAEIRKADASDALAVAICHAHHRASAAHVVAGKRMA.

Catalysis depends on residues aspartate 8, glutamate 68, and aspartate 140. Mg(2+) contacts are provided by aspartate 8, glutamate 68, and aspartate 140.

This sequence belongs to the RuvC family. As to quaternary structure, homodimer which binds Holliday junction (HJ) DNA. The HJ becomes 2-fold symmetrical on binding to RuvC with unstacked arms; it has a different conformation from HJ DNA in complex with RuvA. In the full resolvosome a probable DNA-RuvA(4)-RuvB(12)-RuvC(2) complex forms which resolves the HJ. It depends on Mg(2+) as a cofactor.

The protein localises to the cytoplasm. It carries out the reaction Endonucleolytic cleavage at a junction such as a reciprocal single-stranded crossover between two homologous DNA duplexes (Holliday junction).. In terms of biological role, the RuvA-RuvB-RuvC complex processes Holliday junction (HJ) DNA during genetic recombination and DNA repair. Endonuclease that resolves HJ intermediates. Cleaves cruciform DNA by making single-stranded nicks across the HJ at symmetrical positions within the homologous arms, yielding a 5'-phosphate and a 3'-hydroxyl group; requires a central core of homology in the junction. The consensus cleavage sequence is 5'-(A/T)TT(C/G)-3'. Cleavage occurs on the 3'-side of the TT dinucleotide at the point of strand exchange. HJ branch migration catalyzed by RuvA-RuvB allows RuvC to scan DNA until it finds its consensus sequence, where it cleaves and resolves the cruciform DNA. This is Crossover junction endodeoxyribonuclease RuvC from Gluconobacter oxydans (strain 621H) (Gluconobacter suboxydans).